The following is a 390-amino-acid chain: GTPase Obg (390 aa).

Positions 1 to 159 (MKFVDEASVK…RELRLELLLL (159 aa)) constitute an Obg domain. An OBG-type G domain is found at 160–333 (ADVGMLGLPN…LCFKLGEFME (174 aa)). Residues 166–173 (GLPNAGKS), 191–195 (FTTLI), 213–216 (DIPG), 283–286 (NKVD), and 314–316 (SAV) each bind GTP. Mg(2+)-binding residues include Ser-173 and Thr-193.

It belongs to the TRAFAC class OBG-HflX-like GTPase superfamily. OBG GTPase family. In terms of assembly, monomer. It depends on Mg(2+) as a cofactor.

It localises to the cytoplasm. In terms of biological role, an essential GTPase which binds GTP, GDP and possibly (p)ppGpp with moderate affinity, with high nucleotide exchange rates and a fairly low GTP hydrolysis rate. Plays a role in control of the cell cycle, stress response, ribosome biogenesis and in those bacteria that undergo differentiation, in morphogenesis control. The chain is GTPase Obg from Vibrio atlanticus (strain LGP32) (Vibrio splendidus (strain Mel32)).